The primary structure comprises 226 residues: MAIKDWHEEDRPREKLLNLGAEYLTDAEILAIFLRTGSKQQSAIELARSLIDHFGGIAELLAAPKEAVLACHGIGTAKYAQLLASLEMGKRYLNSELKSGNSLNRSQVVKDYITTQIRRESKEVFAVLCLDNGLNLLDYKVLFVGGLSSCSVCVKQVLRHALEQGASQIIIAHNHPNQDATPSAADIHLTQTLKLACEAIDLRLTDHIIVGRNQTLSFAETATAPF.

The MPN domain occupies 102–224 (SLNRSQVVKD…TLSFAETATA (123 aa)). 3 residues coordinate Zn(2+): H173, H175, and D186. The JAMM motif motif lies at 173 to 186 (HNHPNQDATPSAAD).

It belongs to the UPF0758 family.

The chain is UPF0758 protein PsycPRwf_0491 from Psychrobacter sp. (strain PRwf-1).